We begin with the raw amino-acid sequence, 447 residues long: Na(+)-translocating NADH-quinone reductase subunit A (447 aa).

This sequence belongs to the NqrA family. As to quaternary structure, composed of six subunits; NqrA, NqrB, NqrC, NqrD, NqrE and NqrF.

The enzyme catalyses a ubiquinone + n Na(+)(in) + NADH + H(+) = a ubiquinol + n Na(+)(out) + NAD(+). Functionally, NQR complex catalyzes the reduction of ubiquinone-1 to ubiquinol by two successive reactions, coupled with the transport of Na(+) ions from the cytoplasm to the periplasm. NqrA to NqrE are probably involved in the second step, the conversion of ubisemiquinone to ubiquinol. This is Na(+)-translocating NADH-quinone reductase subunit A from Cellvibrio japonicus (strain Ueda107) (Pseudomonas fluorescens subsp. cellulosa).